The sequence spans 291 residues: Methionine aminopeptidase (291 aa).

Residue His118 participates in substrate binding. A divalent metal cation contacts are provided by Asp135, Asp146, and His209. Substrate is bound at residue His216. A divalent metal cation-binding residues include Glu241 and Glu273.

Belongs to the peptidase M24A family. Methionine aminopeptidase type 1 subfamily. Monomer. Co(2+) serves as cofactor. Requires Zn(2+) as cofactor. Mn(2+) is required as a cofactor. It depends on Fe(2+) as a cofactor.

It carries out the reaction Release of N-terminal amino acids, preferentially methionine, from peptides and arylamides.. Removes the N-terminal methionine from nascent proteins. The N-terminal methionine is often cleaved when the second residue in the primary sequence is small and uncharged (Met-Ala-, Cys, Gly, Pro, Ser, Thr, or Val). Requires deformylation of the N(alpha)-formylated initiator methionine before it can be hydrolyzed. The protein is Methionine aminopeptidase of Chlamydia trachomatis serovar D (strain ATCC VR-885 / DSM 19411 / UW-3/Cx).